Here is a 373-residue protein sequence, read N- to C-terminus: Spore germination protein A3 (373 aa).

The first 17 residues, 1–17, serve as a signal peptide directing secretion; that stretch reads MKIRILCMFICTLLLSG. The N-palmitoyl cysteine moiety is linked to residue C18. Residue C18 is the site of S-diacylglycerol cysteine attachment.

It belongs to the GerABKC lipoprotein family.

Its subcellular location is the cell membrane. Its function is as follows. Forms a complex at the inner spore membrane which acts as a receptor for L-alanine, thus is involved in the stimulation of germination in response to alanine. Can stimulate germination in the absence of GerD and GerK gene products (fructose and glucose receptors, respectively), but the response is improved in their presence. This Bacillus subtilis (strain 168) protein is Spore germination protein A3 (gerAC).